The sequence spans 999 residues: Tyrosine-protein kinase Mer (999 aa).

The first 20 residues, 1–20 (MGPAPLPLLLGLFLPALWRR), serve as a signal peptide directing secretion. Topologically, residues 21–505 (AITEAREEAK…PGNADPVLII (485 aa)) are extracellular. Ig-like C2-type domains are found at residues 81–186 (PQVT…EIVS) and 197–273 (PHFT…LTVS). 14 N-linked (GlcNAc...) asparagine glycosylation sites follow: Asn114, Asn170, Asn207, Asn215, Asn234, Asn294, Asn316, Asn329, Asn336, Asn354, Asn389, Asn395, Asn442, and Asn454. The cysteines at positions 115 and 175 are disulfide-linked. Residues Cys218 and Cys262 are joined by a disulfide bond. Fibronectin type-III domains are found at residues 286–381 (PPTE…TTEG) and 386–484 (APLN…PAHG). The chain crosses the membrane as a helical span at residues 506–526 (FGCFCGFILIGLILYISLAIR). At 527-999 (KRVQETKFGN…DSSEGSEVLM (473 aa)) the chain is on the cytoplasmic side. At Ser543 the chain carries Phosphoserine. A Protein kinase domain is found at 587–858 (LILGKILGEG…VLRLQLEKLL (272 aa)). Residues 593–601 (LGEGEFGSV) and Lys615 contribute to the ATP site. Residue Asp723 is the Proton acceptor of the active site. Phosphotyrosine; by autocatalysis is present on residues Tyr749, Tyr753, Tyr754, and Tyr872. Ser935 carries the phosphoserine modification.

It belongs to the protein kinase superfamily. Tyr protein kinase family. AXL/UFO subfamily. As to quaternary structure, interacts (upon activation) with TNK2; stimulates TNK2 autophosphorylation. Interacts (via N-terminus) with extracellular ligands LGALS3, TUB, TULP1 and GAS6. Interacts with VAV1 in a phosphotyrosine-independent manner. Interacts with TIMD4; this interaction enhances TIMD4-mediated efferocytosis. Post-translationally, autophosphorylated on Tyr-749, Tyr-753 and Tyr-754 in the activation loop allowing full activity. Autophosphorylated on Tyr-872 leading to recruitment of downstream partners of the signaling cascade such as PLCG2. Not expressed in normal B- and T-lymphocytes but is expressed in numerous neoplastic B- and T-cell lines. Highly expressed in testis, ovary, prostate, lung, and kidney, with lower expression in spleen, small intestine, colon, and liver.

It localises to the cell membrane. The catalysed reaction is L-tyrosyl-[protein] + ATP = O-phospho-L-tyrosyl-[protein] + ADP + H(+). Functionally, receptor tyrosine kinase that transduces signals from the extracellular matrix into the cytoplasm by binding to several ligands including LGALS3, TUB, TULP1 or GAS6. Regulates many physiological processes including cell survival, migration, differentiation, and phagocytosis of apoptotic cells (efferocytosis). Ligand binding at the cell surface induces autophosphorylation of MERTK on its intracellular domain that provides docking sites for downstream signaling molecules. Following activation by ligand, interacts with GRB2 or PLCG2 and induces phosphorylation of MAPK1, MAPK2, FAK/PTK2 or RAC1. MERTK signaling plays a role in various processes such as macrophage clearance of apoptotic cells, platelet aggregation, cytoskeleton reorganization and engulfment. Functions in the retinal pigment epithelium (RPE) as a regulator of rod outer segments fragments phagocytosis. Also plays an important role in inhibition of Toll-like receptors (TLRs)-mediated innate immune response by activating STAT1, which selectively induces production of suppressors of cytokine signaling SOCS1 and SOCS3. This chain is Tyrosine-protein kinase Mer (MERTK), found in Homo sapiens (Human).